The sequence spans 241 residues: Terpene cyclase pyr4 (241 aa).

The next 7 membrane-spanning stretches (helical) occupy residues 20 to 40 (IADW…LAMI), 49 to 69 (YGMA…YSVI), 79 to 99 (AVLT…IKFA), 113 to 133 (LPWI…ALAA), 141 to 161 (ANWG…CQLM), 168 to 188 (GASY…GIFL), and 206 to 226 (FVTW…TFLW).

The protein belongs to the paxB family.

It localises to the membrane. The catalysed reaction is 2-oxo-3-[(8S)-epoxy-(2E,6E)-farnesyl]-6-(pyridin-3-yl)-2H-pyran-4-olate + H(+) = deacetylpyripyropene E. The protein operates within secondary metabolite biosynthesis; terpenoid biosynthesis. Terpene cyclase; part of the gene cluster that mediates the biosynthesis of pyripyropene A, a specific human acyl-coenzyme A:cholesterol acyltransferase 2 inhibitor. The first step of the pathway is the synthesis of nicotinyl-CoA from nicotinic acid by the nicotinic acid-CoA ligase pyr1. Nicotinyl-CoA is then a substrate of polyketide synthase pyr2 to produce 4-hydroxy-6-(3-pyridinyl)-2H-pyran-2-one (HPPO) which is further prenylated by the polyprenyl transferase pyr6 to yield farnesyl-HPPO. The next steps consist of an epoxidation of farnesyl-HPPO to epoxyfarnesyl-HPPO by FAD-dependent monooxygenase pyr5 and a cyclization of the terpenoid portion by the terpene cyclase pyr4 to yield deacetyl-pyripyropene E. The 2 cytochrome P450 monooxygenases pyr3 and pyr9, and the 2 acetyltransferases pyr7 and pyr8 are involved in the conversion of deacetyl-pyripyropene E into pyripyropene A through several cycles of oxidation and acetylation steps. Pyr7 acetylates deacetyl-pyripyropene E to pyripyropene E which is oxidized to 11-deacetyl-pyripyropene O by pyr3, which is in turn acetylated into pyripyropene O by pyr8. Pyripyropene O is then oxidized to deacetyl-pyripyropene A by pyr9. Deacetyl-pyripyropene A is finally acetylated to pyripyropene A by pyr8. The protein is Terpene cyclase pyr4 of Aspergillus fumigatus (strain ATCC MYA-4609 / CBS 101355 / FGSC A1100 / Af293) (Neosartorya fumigata).